Consider the following 403-residue polypeptide: F-box only protein 22 (403 aa).

N-acetylmethionine is present on M1. The F-box domain occupies 19 to 71; the sequence is STFVLSNLAEVVERVLTFLPAKALLRVACVCRLWRECVRRVLRTHRSVTWISA. At S128 the chain carries Phosphoserine. K194 bears the N6-acetyllysine mark.

As to quaternary structure, directly interacts with SKP1 and CUL1.

It localises to the cytoplasm. It is found in the myofibril. Its subcellular location is the sarcomere. The protein resides in the z line. Its function is as follows. Substrate-recognition component of the SCF (SKP1-CUL1-F-box protein)-type E3 ubiquitin ligase complex. Promotes the proteasome-dependent degradation of key sarcomeric proteins, such as alpha-actinin (ACTN2) and filamin-C (FLNC), essential for maintenance of normal contractile function. The chain is F-box only protein 22 (FBXO22) from Pongo abelii (Sumatran orangutan).